A 421-amino-acid polypeptide reads, in one-letter code: eIF5-mimic protein 1 (421 aa).

The segment at 1–24 (MNTGKQQKPVLTGQRFKTRKRDEK) is disordered. Residues 250–417 (TQQTLGTRKE…QNAEEESESE (168 aa)) form the W2 domain.

Belongs to the BZW family.

The protein localises to the cytoplasm. Translation initiation regulator which may repress non-AUG initiated translation and repeat-associated non-AUG (RAN) initiated translation by acting as a competitive inhibitor of eukaryotic translation initiation factor 5 (EIF5) function. This is eIF5-mimic protein 1 (bzw2) from Danio rerio (Zebrafish).